A 409-amino-acid chain; its full sequence is DEP domain-containing mTOR-interacting protein (409 aa).

At Met-1 the chain carries N-acetylmethionine. Residues 1–10 show a composition bias toward gly residues; that stretch reads MEEGSSGGSG. Residues 1-23 form a disordered region; sequence MEEGSSGGSGSSDSNAGGSGGVQ. DEP domains lie at 36–119 and 146–219; these read TGEQ…RFRK and PETT…QFRM. Positions 217–235 match the DDEX motif motif; it reads FRMNFRRRRRLMELLNETS. Ser-235 is modified (phosphoserine). At Thr-241 the chain carries Phosphothreonine. Ser-244 and Ser-258 each carry phosphoserine. Phosphothreonine is present on Thr-259. A phosphoserine mark is found at Ser-263, Ser-265, Ser-280, Ser-282, Ser-283, Ser-286, and Ser-287. Positions 286–291 match the BetaTrCP degron motif motif; sequence SSGYFS. At Tyr-289 the chain carries Phosphotyrosine. A phosphoserine mark is found at Ser-291 and Ser-293. Thr-295 bears the Phosphothreonine mark. Residues Ser-297, Ser-298, and Ser-299 each carry the phosphoserine modification. Residues 330–407 enclose the PDZ domain; the sequence is TFTIVGDAVG…TIVMEVMEEL (78 aa).

Associated component of the mechanistic target of rapamycin complex 1 (mTORC1) which contains MTOR, MLST8 and RPTOR. Associated component of the mechanistic target of rapamycin complex 2 (mTORC2) which contains MTOR, MLST8, PROTOR1, RICTOR, MAPKAP1 and DEPTOR. Interacts (via PDZ domain) with MTOR; interacts with MTOR within both mTORC1 and mTORC2. Interacts (via PDZ domain) with MINAR1 (via N-terminus). Interacts with SIK3. Phosphorylation weakens interaction with MTOR within mTORC1 and mTORC2. Phosphorylated at Ser-286, Ser-287 and Ser-291 in response to mitogenic stimulation by MTOR: DEPTOR is either directly phosphorylated by MTOR or indirectly via proteins kinases that are activated by MTOR, such as CK1/CSNK1A1. Phosphorylation at Ser-286, Ser-287 and Ser-291 promotes ubiquitination by the SCF(BTRC) complex, followed by degradation. Phosphorylation at Ser-235 by MAPK3/ERK1 promotes deubiquitination by USP7, enhancing its stability. Phosphorylation at Tyr-291 by SYK impairs its interaction with MTOR, promoting mTORC1 and mTORC2 signaling. In terms of processing, ubiquitinated; leading to proteasomal degradation. Ubiquitination by the SCF(BTRC) and SCF(FBXW11) complexes following phosphorylation at Ser-286, Ser-287 and Ser-291 by MTOR, leads to its degradation by the proteasome. Deubiquitinated by OTUB1 in response to amino acid via a non-canonical mechanism, leading to DEPTOR stability. Deubiquitinated by USP7 following phosphorylation at Ser-235, promoting its stability.

It is found in the lysosome membrane. Inhibited upon phosphatidic acid-binding: phosphatidic acid produced upon mitogenic stimulation promotes DEPTOR dissociatiom from the mTORC1 and mTORC2 complexes, leading to their activation. Specifically binds unsaturated phosphatidic acid, such as 16:0-18:1, 18:0-18:1 and di-18:1. Inhibited when nutrients are present via a feedback loop: phosphorylation by MTOR promotes DEPTOR ubiquitination and degradation. Functionally, negative regulator of the mTORC1 and mTORC2 complexes: inhibits the protein kinase activity of MTOR, thereby inactivating both complexes. DEPTOR inhibits mTORC1 and mTORC2 to induce autophagy. In contrast to AKT1S1/PRAS40, only partially inhibits mTORC1 activity. The sequence is that of DEP domain-containing mTOR-interacting protein from Mus musculus (Mouse).